Here is a 689-residue protein sequence, read N- to C-terminus: Glycine--tRNA ligase beta subunit (689 aa).

The protein belongs to the class-II aminoacyl-tRNA synthetase family. Tetramer of two alpha and two beta subunits.

It localises to the cytoplasm. The catalysed reaction is tRNA(Gly) + glycine + ATP = glycyl-tRNA(Gly) + AMP + diphosphate. This chain is Glycine--tRNA ligase beta subunit, found in Shewanella woodyi (strain ATCC 51908 / MS32).